Consider the following 1802-residue polypeptide: Transposon Ty4-H Gag-Pol polyprotein (1802 aa).

A coiled-coil region spans residues 39-115 (RKVSIKDEQV…IQLLETNENN (77 aa)). The interval 381–501 (NNNLSPVQNE…KTKMVLSRKY (121 aa)) is ty4 protease. The For protease activity; shared with dimeric partner role is filled by aspartate 414. The tract at residues 539–599 (AIKPTSSPGF…EPNEFWCQTC (61 aa)) is integrase-type zinc finger-like. The 168-residue stretch at 619–786 (TDHEPGSSWC…LPLKAISRQP (168 aa)) folds into the Integrase catalytic domain. 2 residues coordinate Mg(2+): aspartate 630 and aspartate 695. The disordered stretch occupies residues 1223–1248 (KRKRKRHDKNNSLTSYELERDKKRSK). The Reverse transcriptase Ty1/copia-type domain maps to 1375–1510 (RNMFMKTLDI…DILGMDLVYN (136 aa)). Residues aspartate 1383, aspartate 1462, aspartate 1463, aspartate 1644, glutamate 1686, and aspartate 1720 each coordinate Mg(2+). One can recognise an RNase H Ty1/copia-type domain in the interval 1644 to 1790 (DASVGSEYDA…KRFIQVLKNK (147 aa)).

As to quaternary structure, the protease is a homodimer, whose active site consists of two apposed aspartic acid residues. Proteolytically processed into capsid protein (CA), Ty4 protease (PR), integrase (IN) and reverse transcriptase/ribonuclease H (RT) proteins. Initially, virus-like particles (VLPs) are composed of the structural unprocessed proteins Gag and Gag-Pol, and also contain the host initiator methionine tRNA (tRNA(i)-Met) which serves as a primer for minus-strand DNA synthesis, and a dimer of genomic Ty RNA. Processing of the polyproteins occurs within the particle and proceeds by an ordered pathway, called maturation. First, the protease (PR) is released by autocatalytic cleavage of the Gag-Pol polyprotein, and this cleavage is a prerequisite for subsequent processing at the remaining sites to release the mature structural and catalytic proteins. Maturation takes place prior to the RT reaction and is required to produce transposition-competent VLPs.

The protein localises to the cytoplasm. It localises to the nucleus. The enzyme catalyses DNA(n) + a 2'-deoxyribonucleoside 5'-triphosphate = DNA(n+1) + diphosphate. The catalysed reaction is Endonucleolytic cleavage to 5'-phosphomonoester.. Functionally, capsid protein (CA) is the structural component of the virus-like particle (VLP), forming the shell that encapsulates the retrotransposons dimeric RNA genome. The aspartyl protease (PR) mediates the proteolytic cleavages of the Gag and Gag-Pol polyproteins after assembly of the VLP. In terms of biological role, reverse transcriptase/ribonuclease H (RT) is a multifunctional enzyme that catalyzes the conversion of the retro-elements RNA genome into dsDNA within the VLP. The enzyme displays a DNA polymerase activity that can copy either DNA or RNA templates, and a ribonuclease H (RNase H) activity that cleaves the RNA strand of RNA-DNA heteroduplexes during plus-strand synthesis and hydrolyzes RNA primers. The conversion leads to a linear dsDNA copy of the retrotransposon that includes long terminal repeats (LTRs) at both ends. Its function is as follows. Integrase (IN) targets the VLP to the nucleus, where a subparticle preintegration complex (PIC) containing at least integrase and the newly synthesized dsDNA copy of the retrotransposon must transit the nuclear membrane. Once in the nucleus, integrase performs the integration of the dsDNA into the host genome. The protein is Transposon Ty4-H Gag-Pol polyprotein (TY4B-H) of Saccharomyces cerevisiae (strain ATCC 204508 / S288c) (Baker's yeast).